We begin with the raw amino-acid sequence, 430 residues long: Spermatogenic leucine zipper protein 1 (430 aa).

The interval 1 to 25 (MASSAKSAEMPTISKTVNPTPDPHQ) is disordered. A coiled-coil region spans residues 62–102 (EQQTAQKFNNLLKEIKDILKNMAGFEEKITEAKELFEETNI). At S107 the chain carries Phosphoserine. Residues 166–177 (KINEMLSTNLPV) form a helix-loop-helix motif region. The segment at 178–244 (SLAPEKEDNE…NVQEETMKIR (67 aa)) is basic motif. Coiled-coil stretches lie at residues 214-269 (LEEK…KLIK) and 316-351 (SLQL…TLQE). S258 bears the Phosphoserine mark. Residues 303 to 324 (LEEQVKKLSHDTYSLQLMAALL) are leucine-zipper.

Interacts with PPP1CC isoform gamma-2. In terms of processing, phosphorylated by MAPK1/ERK2 and MAPK3/ERK1. As to expression, specifically and strongly expressed in the testis. Expressed in several tumor cell lines.

It is found in the cytoplasm. The protein resides in the nucleus. Transcription factor that binds to the DNA sequence 5'-CANNTG-3'(E box) and the G-box motif. May play an important role in the regulation of cell proliferation and differentiation during spermatogenesis. This chain is Spermatogenic leucine zipper protein 1 (SPZ1), found in Homo sapiens (Human).